The following is a 439-amino-acid chain: Leukocyte immunoglobulin-like receptor subfamily A member 3 (439 aa).

A signal peptide spans 1-23; that stretch reads MTPILTVLICLGLSLDPRTHVQA. 4 Ig-like C2-type domains span residues 27–108, 119–224, 226–315, and 326–415; these read PKPT…AGLS, TGAY…GVSK, PSLS…DPLD, and PFLS…SDPL. An intrachain disulfide couples Cys49 to Cys98. Residue Asn140 is glycosylated (N-linked (GlcNAc...) asparagine). Disulfide bonds link Cys145–Cys197, Cys157–Cys167, and Cys246–Cys297. 3 N-linked (GlcNAc...) asparagine glycosylation sites follow: Asn281, Asn302, and Asn341. Residues Cys346 and Cys397 are joined by a disulfide bond. Residue Asn431 is glycosylated (N-linked (GlcNAc...) asparagine).

In terms of processing, N-glycosylation is required for ligand binding. In terms of tissue distribution, detected in B-cells, and at lower levels in natural killer (NK) cells. Detected in peripheral blood monocytes and lung.

The protein localises to the secreted. Acts as a soluble receptor for class I MHC antigens. Binds both classical and non-classical HLA class I molecules but with reduced affinities compared to LILRB1 or LILRB2. Binds with high affinity to the surface of monocytes, leading to abolish LPS-induced TNF-alpha production by monocytes. This is Leukocyte immunoglobulin-like receptor subfamily A member 3 (LILRA3) from Homo sapiens (Human).